The following is a 453-amino-acid chain: tRNA modification GTPase MnmE (453 aa).

Residues Arg28, Glu90, and Arg129 each contribute to the (6S)-5-formyl-5,6,7,8-tetrahydrofolate site. Residues 224 to 375 (GLRVAIIGRP…LSSALLKLCG (152 aa)) enclose the TrmE-type G domain. Asn234 lines the K(+) pocket. GTP contacts are provided by residues 234-239 (NVGKSS), 253-259 (TDLPGTT), 278-281 (DTAG), and 356-358 (SAR). Residue Ser238 participates in Mg(2+) binding. Residues Thr253, Leu255, and Thr258 each coordinate K(+). Thr259 is a binding site for Mg(2+). A (6S)-5-formyl-5,6,7,8-tetrahydrofolate-binding site is contributed by Lys453.

This sequence belongs to the TRAFAC class TrmE-Era-EngA-EngB-Septin-like GTPase superfamily. TrmE GTPase family. In terms of assembly, homodimer. Heterotetramer of two MnmE and two MnmG subunits. The cofactor is K(+).

It is found in the cytoplasm. Its function is as follows. Exhibits a very high intrinsic GTPase hydrolysis rate. Involved in the addition of a carboxymethylaminomethyl (cmnm) group at the wobble position (U34) of certain tRNAs, forming tRNA-cmnm(5)s(2)U34. This Synechococcus sp. (strain RCC307) protein is tRNA modification GTPase MnmE.